A 493-amino-acid polypeptide reads, in one-letter code: Cysteine--tRNA ligase (493 aa).

Zn(2+) is bound at residue C29. Residues 31 to 41 carry the 'HIGH' region motif; it reads VTVYDLCHLGH. Positions 213, 238, and 242 each coordinate Zn(2+). The 'KMSKS' region signature appears at 270-274; that stretch reads KMSKS. K273 contacts ATP.

Belongs to the class-I aminoacyl-tRNA synthetase family. In terms of assembly, monomer. It depends on Zn(2+) as a cofactor.

It is found in the cytoplasm. It carries out the reaction tRNA(Cys) + L-cysteine + ATP = L-cysteinyl-tRNA(Cys) + AMP + diphosphate. The protein is Cysteine--tRNA ligase of Parasynechococcus marenigrum (strain WH8102).